A 788-amino-acid chain; its full sequence is LPS-assembly protein LptD (788 aa).

The first 24 residues, 1–24 (MKKRFPTLLATLIWTALYSQHTLA), serve as a signal peptide directing secretion.

Belongs to the LptD family. Component of the lipopolysaccharide transport and assembly complex. Interacts with LptE and LptA.

It localises to the cell outer membrane. Its function is as follows. Together with LptE, is involved in the assembly of lipopolysaccharide (LPS) at the surface of the outer membrane. This Yersinia enterocolitica serotype O:8 / biotype 1B (strain NCTC 13174 / 8081) protein is LPS-assembly protein LptD.